Consider the following 142-residue polypeptide: uncharacterized protein (142 aa).

2 helical membrane-spanning segments follow: residues 75–97 (VFFR…YIVA) and 107–124 (LSIV…KLFY).

It is found in the cell membrane. This is an uncharacterized protein from Archaeoglobus fulgidus (strain ATCC 49558 / DSM 4304 / JCM 9628 / NBRC 100126 / VC-16).